A 223-amino-acid polypeptide reads, in one-letter code: von Willebrand factor C domain-containing protein 2-like (223 aa).

The signal sequence occupies residues 1-21 (MGPFLPAICVVLLALNAAVSP). VWFC domains follow at residues 51-110 (KGCV…PECK) and 114-172 (NFCE…PICK).

It localises to the secreted. The protein localises to the synapse. Its function is as follows. May play a role in bone differentiation and matrix mineralization. May play a role in neural development. The polypeptide is von Willebrand factor C domain-containing protein 2-like (vwc2l) (Danio rerio (Zebrafish)).